The chain runs to 359 residues: UDP-3-O-acylglucosamine N-acyltransferase (359 aa).

Residue histidine 256 is the Proton acceptor of the active site.

It belongs to the transferase hexapeptide repeat family. LpxD subfamily. As to quaternary structure, homotrimer.

It catalyses the reaction a UDP-3-O-[(3R)-3-hydroxyacyl]-alpha-D-glucosamine + a (3R)-hydroxyacyl-[ACP] = a UDP-2-N,3-O-bis[(3R)-3-hydroxyacyl]-alpha-D-glucosamine + holo-[ACP] + H(+). It functions in the pathway bacterial outer membrane biogenesis; LPS lipid A biosynthesis. Its function is as follows. Catalyzes the N-acylation of UDP-3-O-acylglucosamine using 3-hydroxyacyl-ACP as the acyl donor. Is involved in the biosynthesis of lipid A, a phosphorylated glycolipid that anchors the lipopolysaccharide to the outer membrane of the cell. The polypeptide is UDP-3-O-acylglucosamine N-acyltransferase (Rhodopseudomonas palustris (strain HaA2)).